Here is a 386-residue protein sequence, read N- to C-terminus: Inactive GDSL esterase/lipase-like protein 23 (386 aa).

A signal peptide spans 1-29 (MMAKNCNLVSVLCVFLVLTLFNKPITVAG). Catalysis depends on Ser43, which acts as the Nucleophile. Asn105, Asn165, and Asn288 each carry an N-linked (GlcNAc...) asparagine glycan. Catalysis depends on residues Asp322 and His325.

Belongs to the 'GDSL' lipolytic enzyme family. In terms of assembly, part of the PYK10 complex. Interacts with MVP1. Expressed mainly in roots.

It localises to the endoplasmic reticulum. Functionally, involved in the control of the PYK10 complex size and possibly substrate specificity. May be exported from the endoplasmic reticulum upon interaction with MVP1. The protein is Inactive GDSL esterase/lipase-like protein 23 (GLL23) of Arabidopsis thaliana (Mouse-ear cress).